Reading from the N-terminus, the 1659-residue chain is Fatty acid synthase subunit alpha (1659 aa).

Residues 114–139 (TQAQASGGAGTIAGAGSSTAPVTAPP) are disordered. Residues 160–235 (AQAFEIVRTL…AALQKTFTGQ (76 aa)) enclose the Carrier domain. Serine 195 carries the post-translational modification O-(pantetheine 4'-phosphoryl)serine. The segment at 588–826 (GRSVLITGAG…LCLMFNTMCS (239 aa)) is ketoreductase (KR) domain. Residues 1030-1575 (KQLLHEVLIQ…QKGAQTIVVH (546 aa)) form the Ketosynthase family 3 (KS3) domain. Catalysis depends on for beta-ketoacyl synthase activity residues cysteine 1217, histidine 1458, and histidine 1499. The tract at residues 1631–1659 (ETLLDPTPPQTNVDDRVARSIVQQESAEP) is disordered.

The protein belongs to the thiolase-like superfamily. Fungal fatty acid synthetase subunit alpha family. As to quaternary structure, [Alpha(6)beta(6)] hexamers of two multifunctional subunits (alpha and beta). In terms of processing, 4'-phosphopantetheine is transferred from CoA to a specific serine of the acyl carrier domain by the C-terminal PPT domain. This modification is essential for activity because fatty acids are bound in thioester linkage to the sulfhydryl of the prosthetic group.

It catalyses the reaction acetyl-CoA + n malonyl-CoA + 2n NADPH + 4n H(+) = a long-chain-acyl-CoA + n CoA + n CO2 + 2n NADP(+).. It carries out the reaction a fatty acyl-[ACP] + malonyl-[ACP] + H(+) = a 3-oxoacyl-[ACP] + holo-[ACP] + CO2. The enzyme catalyses a (3R)-hydroxyacyl-[ACP] + NADP(+) = a 3-oxoacyl-[ACP] + NADPH + H(+). It participates in secondary metabolite biosynthesis. Functionally, fatty acid synthase subunit alpha; part of the gene cluster that mediates the biosynthesis of aspercryptins, linear lipopeptides built from six amino acids including 2 highly unusual and nonproteogenic amino acids, 2-amino-octanoic acid (2aoa) and 2-amino-dodecanol (2adol). The core structure of aspercryptins is as follows: Ser/Ala-Thr-Ile/Val-2aoa-Asn-2adol. The first step of aspercryptin biosynthesis is the generation of the fatty acid precursors, octanoic and dodecanoic acids, by the FAS subunits atnF and atnM. The fatty acid precursors are likely transformed into the corresponding alpha-amino fatty acids in three steps. First, they are hydroxylated by the cytochrome P450 monooxygenase atnE, then oxidized to the corresponding alpha-keto acids by the NAD(P)-dependent oxidoreductase atnD, and finally converted to the alpha-amino fatty acids by the PLP-dependent aminotransferases atnH or atnJ. the alpha-amino fatty acids, 2-amino-octanoic and 2-amino-dodecanoic acids, are recognized, activated, and covalently tethered to the NRPS atnA by its fourth and sixth adenylation domains. The second module of atnA is the Thr module and contains an epimerase (E) domain responsible for the epimerization of Thr to D-allo-Thr. Additionally, despite atnA having only one epimerase domain, the first amino acid of aspercryptin A1 is D-Ser, suggesting that serine is either loaded directly as D-Ser on the first module or that the epimerase domain in the threonine module epimerizes both L-Ser and L-Thr. After condensation of the hexapeptide of aspercryptin, the C-terminal reductase (TE) domain might be involved in the reductive release and production of the aldehyde hexapeptide. Further reduction would generate aspercryptins. The variety of aspercryptins produced reflects the flexibility of the atnA NRPS, allowing incorporation of alanine instead of serine, valine for isoleucine, and a C10 fatty amino alcohol instead of the C12 version. AtnB seems to be involved in the selectivity for Ile versus Val by the third module. Moreover, type B, C and D aspercryptins have an additional N-terminal cichorine, acetyl and propionyl group respectively. The protein is Fatty acid synthase subunit alpha of Emericella nidulans (strain FGSC A4 / ATCC 38163 / CBS 112.46 / NRRL 194 / M139) (Aspergillus nidulans).